The primary structure comprises 586 residues: 3-hydroxy-3-methylglutaryl-coenzyme A reductase 3 (586 aa).

The next 2 membrane-spanning stretches (helical) occupy residues 36 to 59 (PSDY…FFSV) and 87 to 107 (ALIC…IGFV). The tract at residues 108–170 (HSFSRASTDS…STTTTSTLSD (63 aa)) is linker. Catalytic stretches follow at residues 171-586 (DDEQ…KITF) and 172-586 (DEQI…KITF). Active-site charge relay system residues include Glu-265, Lys-397, and Asp-473. The active-site Proton donor is the His-571. An N-linked (GlcNAc...) asparagine glycan is attached at Asn-575.

This sequence belongs to the HMG-CoA reductase family.

The protein localises to the endoplasmic reticulum membrane. Its subcellular location is the mitochondrion membrane. It localises to the plastid membrane. It catalyses the reaction (R)-mevalonate + 2 NADP(+) + CoA = (3S)-3-hydroxy-3-methylglutaryl-CoA + 2 NADPH + 2 H(+). It participates in metabolic intermediate biosynthesis; (R)-mevalonate biosynthesis; (R)-mevalonate from acetyl-CoA: step 3/3. Catalyzes the synthesis of mevalonate. The specific precursor of all isoprenoid compounds present in plants. This Hevea brasiliensis (Para rubber tree) protein is 3-hydroxy-3-methylglutaryl-coenzyme A reductase 3 (HMGR3).